Here is a 435-residue protein sequence, read N- to C-terminus: Tungsten-containing formylmethanofuran dehydrogenase 2 subunit B (435 aa).

Sec121 is a non-standard amino acid (selenocysteine).

This sequence belongs to the FwdB family. As to quaternary structure, this enzyme is composed of six subunits FwdA, FwdC, FwdD, FwdE, FwdF and FwdG. It depends on W-bis(molybdopterin guanine dinucleotide) as a cofactor.

It catalyses the reaction N-formylmethanofuran + 2 oxidized [2Fe-2S]-[ferredoxin] + H2O = methanofuran + 2 reduced [2Fe-2S]-[ferredoxin] + CO2 + H(+). The protein operates within one-carbon metabolism; methanogenesis from CO(2); 5,10-methenyl-5,6,7,8-tetrahydromethanopterin from CO(2): step 1/3. Its function is as follows. Catalyzes the reversible oxidation of CO(2) and methanofuran (MFR) to N-formylmethanofuran (CHO-MFR). This enzyme is oxygen-labile. In Methanocaldococcus jannaschii (strain ATCC 43067 / DSM 2661 / JAL-1 / JCM 10045 / NBRC 100440) (Methanococcus jannaschii), this protein is Tungsten-containing formylmethanofuran dehydrogenase 2 subunit B (fwdB).